The following is a 317-amino-acid chain: Melanocyte-stimulating hormone receptor (317 aa).

At 1–37 (MPVLGSQRRLLGSLNCTPPATFSLTLAPNRTGPQCLE) the chain is on the extracellular side. N-linked (GlcNAc...) asparagine glycosylation is present at asparagine 29. Residues 38–63 (VSIPDGLFLSLGLVSLVENVLVVAAI) form a helical membrane-spanning segment. At 64 to 72 (AKNRNLHSP) the chain is on the cytoplasmic side. A helical transmembrane segment spans residues 73-93 (MYYFICCLAVSDLLVSVSNVL). The Extracellular portion of the chain corresponds to 94-118 (ETAVMLLLEAGALAARAAVVQQLDN). A helical transmembrane segment spans residues 119-140 (VIDVLICGSMVSSLCFLGAIAM). The Cytoplasmic portion of the chain corresponds to 141 to 163 (DRYISIFYALRYHSVVTLPRAWR). The helical transmembrane segment at 164–183 (IIAAIWVASILTSLLFITYY) threads the bilayer. The Extracellular segment spans residues 184–191 (NHTVVLLC). A helical membrane pass occupies residues 192–211 (LVGFFIAMLALMAILYVHML). The Cytoplasmic portion of the chain corresponds to 212–240 (ARACQHARDIARLQKRQHPIHQGFGLKGA). A helical transmembrane segment spans residues 241–266 (ATLTILLGVFFLCWGPFFLHLSLIVL). Residues 267–279 (CPQHPTCGCIFKN) lie on the Extracellular side of the membrane. The chain crosses the membrane as a helical span at residues 280 to 300 (FNLFLALIICNAIVDPLIYAF). Residues 301-317 (RSQELRKTLQEVLQCSW) lie on the Cytoplasmic side of the membrane. Residue cysteine 315 is the site of S-palmitoyl cysteine attachment.

The protein belongs to the G-protein coupled receptor 1 family. Interacts with MGRN1, but does not undergo MGRN1-mediated ubiquitination; this interaction competes with GNAS-binding and thus inhibits agonist-induced cAMP production. Interacts with OPN3; the interaction results in a decrease in MC1R-mediated cAMP signaling and ultimately a decrease in melanin production in melanocytes.

The protein localises to the cell membrane. Receptor for MSH (alpha, beta and gamma) and ACTH. The activity of this receptor is mediated by G proteins which activate adenylate cyclase. Mediates melanogenesis, the production of eumelanin (black/brown) and phaeomelanin (red/yellow), via regulation of cAMP signaling in melanocytes. The polypeptide is Melanocyte-stimulating hormone receptor (MC1R) (Alces alces alces (European moose)).